A 431-amino-acid polypeptide reads, in one-letter code: Enolase (431 aa).

A (2R)-2-phosphoglycerate-binding site is contributed by Gln-168. Glu-210 (proton donor) is an active-site residue. Mg(2+) is bound by residues Asp-247, Glu-291, and Asp-318. Lys-343, Arg-372, Ser-373, and Lys-394 together coordinate (2R)-2-phosphoglycerate. Lys-343 acts as the Proton acceptor in catalysis.

This sequence belongs to the enolase family. As to quaternary structure, component of the RNA degradosome, a multiprotein complex involved in RNA processing and mRNA degradation. Requires Mg(2+) as cofactor.

It is found in the cytoplasm. It localises to the secreted. The protein localises to the cell surface. It carries out the reaction (2R)-2-phosphoglycerate = phosphoenolpyruvate + H2O. Its pathway is carbohydrate degradation; glycolysis; pyruvate from D-glyceraldehyde 3-phosphate: step 4/5. Functionally, catalyzes the reversible conversion of 2-phosphoglycerate (2-PG) into phosphoenolpyruvate (PEP). It is essential for the degradation of carbohydrates via glycolysis. This chain is Enolase, found in Acinetobacter baumannii (strain AYE).